We begin with the raw amino-acid sequence, 431 residues long: tRNA(Ile)-lysidine synthase (431 aa).

25–30 (SGGLDS) is an ATP binding site.

This sequence belongs to the tRNA(Ile)-lysidine synthase family.

Its subcellular location is the cytoplasm. The catalysed reaction is cytidine(34) in tRNA(Ile2) + L-lysine + ATP = lysidine(34) in tRNA(Ile2) + AMP + diphosphate + H(+). Ligates lysine onto the cytidine present at position 34 of the AUA codon-specific tRNA(Ile) that contains the anticodon CAU, in an ATP-dependent manner. Cytidine is converted to lysidine, thus changing the amino acid specificity of the tRNA from methionine to isoleucine. The polypeptide is tRNA(Ile)-lysidine synthase (Legionella pneumophila (strain Paris)).